A 465-amino-acid polypeptide reads, in one-letter code: Beta-1,2-xylosyltransferase XYXT1 (465 aa).

Topologically, residues 1-11 (MKAAVRSKKSK) are cytoplasmic. A helical; Signal-anchor for type II membrane protein membrane pass occupies residues 12–32 (GSFCHPPLLLLIVAIQFLVIY). Topologically, residues 33-465 (SPTLDQYMVM…VLLKALHLLR (433 aa)) are lumenal. N-linked (GlcNAc...) asparagine glycans are attached at residues N80, N118, N125, N266, and N403.

It belongs to the glycosyltransferase 61 family. In terms of tissue distribution, widely expressed.

The protein localises to the golgi apparatus membrane. The protein operates within glycan metabolism. Functionally, glycosyltransferase involved in the xylosylation of xylan, the major hemicellulose (non-cellulosic component) of primary and secondary walls of angiosperms. Possesses beta-1,2-xylosyltransferase activity, transferring xylose from UDP-xylose to the xylan backbone. Catalyzes the addition of 2-O-xylosyl side chains to the xylan backbone. This Oryza sativa subsp. japonica (Rice) protein is Beta-1,2-xylosyltransferase XYXT1.